The following is a 177-amino-acid chain: Putative adenylate kinase (177 aa).

Gly10, Gly12, Lys13, Thr14, and Thr15 together coordinate ATP. The interval 30 to 50 (SLRDYAIEKGIGEMKGDELEV) is NMP. Residues 99 to 109 (ERGYSREKVGE) are LID. Residues Arg100 and Lys138 each contribute to the ATP site.

Belongs to the adenylate kinase family. AK6 subfamily. In terms of assembly, interacts with uS11. Not a structural component of 40S pre-ribosomes, but transiently interacts with them by binding to uS11.

The catalysed reaction is AMP + ATP = 2 ADP. It catalyses the reaction ATP + H2O = ADP + phosphate + H(+). In terms of biological role, broad-specificity nucleoside monophosphate (NMP) kinase that catalyzes the reversible transfer of the terminal phosphate group between nucleoside triphosphates and monophosphates. Also has ATPase activity. Involved in the late maturation steps of the 30S ribosomal particles, specifically 16S rRNA maturation. While NMP activity is not required for ribosome maturation, ATPase activity is. Associates transiently with small ribosomal subunit protein uS11. ATP hydrolysis breaks the interaction with uS11. May temporarily remove uS11 from the ribosome to enable a conformational change of the ribosomal RNA that is needed for the final maturation step of the small ribosomal subunit. The chain is Putative adenylate kinase from Thermococcus gammatolerans (strain DSM 15229 / JCM 11827 / EJ3).